A 443-amino-acid chain; its full sequence is tRNA(Ile2) 2-agmatinylcytidine synthetase TiaS (443 aa).

This sequence belongs to the TiaS family.

The protein resides in the cytoplasm. It carries out the reaction cytidine(34) in tRNA(Ile2) + agmatine + ATP + H2O = 2-agmatinylcytidine(34) in tRNA(Ile2) + AMP + 2 phosphate + 2 H(+). ATP-dependent agmatine transferase that catalyzes the formation of 2-agmatinylcytidine (agm2C) at the wobble position (C34) of tRNA(Ile2), converting the codon specificity from AUG to AUA. The sequence is that of tRNA(Ile2) 2-agmatinylcytidine synthetase TiaS from Saccharolobus islandicus (strain L.S.2.15 / Lassen #1) (Sulfolobus islandicus).